The following is a 200-amino-acid chain: GTP cyclohydrolase-2 (200 aa).

50 to 54 contacts GTP; the sequence is RIHSE. 3 residues coordinate Zn(2+): cysteine 55, cysteine 66, and cysteine 68. GTP is bound by residues glutamine 71, 93–95, and threonine 115; that span reads EGR. The active-site Proton acceptor is aspartate 127. Arginine 129 (nucleophile) is an active-site residue. GTP is bound by residues threonine 150 and lysine 155.

Belongs to the GTP cyclohydrolase II family. The cofactor is Zn(2+).

It catalyses the reaction GTP + 4 H2O = 2,5-diamino-6-hydroxy-4-(5-phosphoribosylamino)-pyrimidine + formate + 2 phosphate + 3 H(+). It functions in the pathway cofactor biosynthesis; riboflavin biosynthesis; 5-amino-6-(D-ribitylamino)uracil from GTP: step 1/4. Its function is as follows. Catalyzes the conversion of GTP to 2,5-diamino-6-ribosylamino-4(3H)-pyrimidinone 5'-phosphate (DARP), formate and pyrophosphate. The polypeptide is GTP cyclohydrolase-2 (Acinetobacter baylyi (strain ATCC 33305 / BD413 / ADP1)).